A 1606-amino-acid polypeptide reads, in one-letter code: Pentafunctional AROM polypeptide (1606 aa).

Positions Met-1 to Asp-390 are 3-dehydroquinate synthase. Residues Asp-45–Asn-47, Glu-85–Lys-88, Gly-116–Val-118, and Asp-121 each bind NAD(+). A 7-phospho-2-dehydro-3-deoxy-D-arabino-heptonate-binding site is contributed by Arg-132. Position 141–142 (Thr-141–Thr-142) interacts with NAD(+). Residues Asp-148 and Lys-154 each contribute to the 7-phospho-2-dehydro-3-deoxy-D-arabino-heptonate site. NAD(+) is bound at residue Lys-163. Asn-164 is a binding site for 7-phospho-2-dehydro-3-deoxy-D-arabino-heptonate. NAD(+)-binding positions include Phe-181 to Thr-184 and Asn-192. Residue Glu-196 coordinates Zn(2+). 7-phospho-2-dehydro-3-deoxy-D-arabino-heptonate is bound by residues Glu-196–Lys-199 and Lys-256. The Proton acceptor; for 3-dehydroquinate synthase activity role is filled by Glu-266. 7-phospho-2-dehydro-3-deoxy-D-arabino-heptonate contacts are provided by residues Arg-270 to Asn-274 and His-277. His-277 lines the Zn(2+) pocket. His-281 functions as the Proton acceptor; for 3-dehydroquinate synthase activity in the catalytic mechanism. Residues His-293 and Lys-362 each contribute to the 7-phospho-2-dehydro-3-deoxy-D-arabino-heptonate site. His-293 provides a ligand contact to Zn(2+). The tract at residues Val-403–Leu-850 is EPSP synthase. Cys-832 functions as the For EPSP synthase activity in the catalytic mechanism. Positions Ala-875–Cys-1070 are shikimate kinase. Gly-882–Thr-889 contacts ATP. Residues Leu-1071–Gln-1296 are 3-dehydroquinase. His-1198 serves as the catalytic Proton acceptor; for 3-dehydroquinate dehydratase activity. The active-site Schiff-base intermediate with substrate; for 3-dehydroquinate dehydratase activity is Lys-1226. Residues Ala-1309–Ser-1606 form a shikimate dehydrogenase region.

The protein in the N-terminal section; belongs to the sugar phosphate cyclases superfamily. Dehydroquinate synthase family. This sequence in the 2nd section; belongs to the EPSP synthase family. It in the 3rd section; belongs to the shikimate kinase family. In the 4th section; belongs to the type-I 3-dehydroquinase family. The protein in the C-terminal section; belongs to the shikimate dehydrogenase family. Homodimer. Zn(2+) is required as a cofactor.

The protein resides in the cytoplasm. The catalysed reaction is 7-phospho-2-dehydro-3-deoxy-D-arabino-heptonate = 3-dehydroquinate + phosphate. It carries out the reaction 3-dehydroquinate = 3-dehydroshikimate + H2O. It catalyses the reaction shikimate + NADP(+) = 3-dehydroshikimate + NADPH + H(+). The enzyme catalyses shikimate + ATP = 3-phosphoshikimate + ADP + H(+). The catalysed reaction is 3-phosphoshikimate + phosphoenolpyruvate = 5-O-(1-carboxyvinyl)-3-phosphoshikimate + phosphate. It functions in the pathway metabolic intermediate biosynthesis; chorismate biosynthesis; chorismate from D-erythrose 4-phosphate and phosphoenolpyruvate: step 2/7. The protein operates within metabolic intermediate biosynthesis; chorismate biosynthesis; chorismate from D-erythrose 4-phosphate and phosphoenolpyruvate: step 3/7. Its pathway is metabolic intermediate biosynthesis; chorismate biosynthesis; chorismate from D-erythrose 4-phosphate and phosphoenolpyruvate: step 4/7. It participates in metabolic intermediate biosynthesis; chorismate biosynthesis; chorismate from D-erythrose 4-phosphate and phosphoenolpyruvate: step 5/7. It functions in the pathway metabolic intermediate biosynthesis; chorismate biosynthesis; chorismate from D-erythrose 4-phosphate and phosphoenolpyruvate: step 6/7. Functionally, the AROM polypeptide catalyzes 5 consecutive enzymatic reactions in prechorismate polyaromatic amino acid biosynthesis. This is Pentafunctional AROM polypeptide from Laccaria bicolor (strain S238N-H82 / ATCC MYA-4686) (Bicoloured deceiver).